A 515-amino-acid polypeptide reads, in one-letter code: MTKTYKYEDQLHFIQKSDDVKNLFIIKKGFVPNMNVEGHLFANDNLSKLLFDELKQFTDDPGSFLPALKQLANVAALPGIVKSSIALPDAHSGYGFSIGNVAAFDMDNCNSIVSPGGVGFDINCGVRLLRTNLLYKDIEPIKEQLVQKLFDLIPVGVGCQGKIPCDYGDLDNILEYGMDWSVCSGYSWAEDKEHCEDFGRMIQADPTVVSYRAKKRGLSQIGTLGAGNHYGEVQVSIYSNIYVVEEIYDEYSAKVMGIDRIGQVCIMTHSGSRGLGHQVASDALVDMENSLNKSKIKVNDKQLACARINSDEGKKYLKGMAAASNYAWVNRSVMTHLTRKAFEEVLKESADDLDMHVVYDVSHNIAKIEDHMVDGKLKRLLLHRKGSTRAFPPYHPLISADFQHIGQPVLVGGTMGTCSYVLTGTQLAMDLTLGSTCHGSGRTLSRNKSRRVLDYNEVLNNLKEKGISIRVASPKLVTEEAPESYKDVSEVVQTCHDSGISKKCVKLRPVAVIKG.

Residues Asp-121, Cys-124, His-229, His-269, and His-363 each contribute to the Mn(2+) site. 228-232 (NHYGE) contributes to the GMP binding site. Residues 363–364 (HN), 412–415 (GGTM), Ser-419, 438–441 (HGSG), and Lys-514 contribute to the GMP site. Residue His-438 is the GMP-histidine intermediate of the active site.

This sequence belongs to the RtcB family. In terms of assembly, catalytic component of the tRNA-splicing ligase complex. Mn(2+) is required as a cofactor.

The enzyme catalyses a 3'-end 3'-phospho-ribonucleotide-RNA + a 5'-end dephospho-ribonucleoside-RNA + GTP = a ribonucleotidyl-ribonucleotide-RNA + GMP + diphosphate. It carries out the reaction a 3'-end 2',3'-cyclophospho-ribonucleotide-RNA + a 5'-end dephospho-ribonucleoside-RNA + GTP + H2O = a ribonucleotidyl-ribonucleotide-RNA + GMP + diphosphate + H(+). Functionally, catalytic subunit of the tRNA-splicing ligase complex that acts by directly joining spliced tRNA halves to mature-sized tRNAs by incorporating the precursor-derived splice junction phosphate into the mature tRNA as a canonical 3',5'-phosphodiester. May act as an RNA ligase with broad substrate specificity, and may function toward other RNAs. This is RNA-splicing ligase RtcB homolog from Theileria annulata.